A 154-amino-acid chain; its full sequence is Large ribosomal subunit protein uL22 (154 aa).

This sequence belongs to the universal ribosomal protein uL22 family. Part of the 50S ribosomal subunit.

This protein binds specifically to 23S rRNA. It makes multiple contacts with different domains of the 23S rRNA in the assembled 50S subunit and ribosome. Functionally, the globular domain of the protein is located near the polypeptide exit tunnel on the outside of the subunit, while an extended beta-hairpin is found that lines the wall of the exit tunnel in the center of the 70S ribosome. The protein is Large ribosomal subunit protein uL22 of Natronomonas pharaonis (strain ATCC 35678 / DSM 2160 / CIP 103997 / JCM 8858 / NBRC 14720 / NCIMB 2260 / Gabara) (Halobacterium pharaonis).